We begin with the raw amino-acid sequence, 823 residues long: DNA ligase (823 aa).

Residues 32-36 (DAEYD), 81-82 (SL), and glutamate 121 contribute to the NAD(+) site. The N6-AMP-lysine intermediate role is filled by lysine 123. NAD(+) is bound by residues arginine 144, glutamate 181, lysine 299, and lysine 323. Residues cysteine 449, cysteine 452, cysteine 467, and cysteine 473 each coordinate Zn(2+). The disordered stretch occupies residues 528–558 (ETADKGSSENENGDAETVSGDLSKYNTQNGK). The BRCT domain maps to 746-823 (GINKAVAGKT…SEAELLTLLC (78 aa)).

Belongs to the NAD-dependent DNA ligase family. LigA subfamily. Mg(2+) serves as cofactor. Mn(2+) is required as a cofactor.

The catalysed reaction is NAD(+) + (deoxyribonucleotide)n-3'-hydroxyl + 5'-phospho-(deoxyribonucleotide)m = (deoxyribonucleotide)n+m + AMP + beta-nicotinamide D-nucleotide.. Functionally, DNA ligase that catalyzes the formation of phosphodiester linkages between 5'-phosphoryl and 3'-hydroxyl groups in double-stranded DNA using NAD as a coenzyme and as the energy source for the reaction. It is essential for DNA replication and repair of damaged DNA. In Neisseria gonorrhoeae (strain NCCP11945), this protein is DNA ligase.